Consider the following 361-residue polypeptide: sn-glycerol-3-phosphate import ATP-binding protein UgpC (361 aa).

Positions 4–235 constitute an ABC transporter domain; that stretch reads LSLKGVRKSY…PATVFVAGFI (232 aa). 37-44 serves as a coordination point for ATP; that stretch reads GPSGCGKS.

It belongs to the ABC transporter superfamily. sn-glycerol-3-phosphate importer (TC 3.A.1.1.3) family. As to quaternary structure, the complex is composed of two ATP-binding proteins (UgpC), two transmembrane proteins (UgpA and UgpE) and a solute-binding protein (UgpB).

It is found in the cell inner membrane. The catalysed reaction is sn-glycerol 3-phosphate(out) + ATP + H2O = sn-glycerol 3-phosphate(in) + ADP + phosphate + H(+). Its function is as follows. Part of the ABC transporter complex UgpBAEC involved in sn-glycerol-3-phosphate (G3P) import. Responsible for energy coupling to the transport system. In Burkholderia cenocepacia (strain HI2424), this protein is sn-glycerol-3-phosphate import ATP-binding protein UgpC.